A 241-amino-acid polypeptide reads, in one-letter code: Demethylmenaquinone methyltransferase (241 aa).

S-adenosyl-L-methionine contacts are provided by residues Thr-60, Asp-81, and 106 to 107 (DA).

It belongs to the class I-like SAM-binding methyltransferase superfamily. MenG/UbiE family.

The enzyme catalyses a 2-demethylmenaquinol + S-adenosyl-L-methionine = a menaquinol + S-adenosyl-L-homocysteine + H(+). The protein operates within quinol/quinone metabolism; menaquinone biosynthesis; menaquinol from 1,4-dihydroxy-2-naphthoate: step 2/2. In terms of biological role, methyltransferase required for the conversion of demethylmenaquinol (DMKH2) to menaquinol (MKH2). The polypeptide is Demethylmenaquinone methyltransferase (Staphylococcus carnosus (strain TM300)).